A 160-amino-acid polypeptide reads, in one-letter code: Cytochrome b6-f complex subunit 4 (160 aa).

3 consecutive transmembrane segments (helical) span residues 36–56 (LLYI…GLAV), 95–115 (LLGV…PFLE), and 131–151 (TVFL…TLPI).

This sequence belongs to the cytochrome b family. PetD subfamily. In terms of assembly, the 4 large subunits of the cytochrome b6-f complex are cytochrome b6, subunit IV (17 kDa polypeptide, petD), cytochrome f and the Rieske protein, while the 4 small subunits are petG, petL, petM and petN. The complex functions as a dimer.

Its subcellular location is the plastid. The protein localises to the chloroplast thylakoid membrane. Component of the cytochrome b6-f complex, which mediates electron transfer between photosystem II (PSII) and photosystem I (PSI), cyclic electron flow around PSI, and state transitions. This chain is Cytochrome b6-f complex subunit 4, found in Spinacia oleracea (Spinach).